The primary structure comprises 183 residues: Dual-action ribosomal maturation protein DarP (183 aa).

The segment at 1–27 (MSSHSQEPVGEENFDDSEYDRPNKSQV) is disordered. A compositionally biased stretch (acidic residues) spans 9 to 18 (VGEENFDDSE).

It belongs to the DarP family.

It localises to the cytoplasm. Functionally, member of a network of 50S ribosomal subunit biogenesis factors which assembles along the 30S-50S interface, preventing incorrect 23S rRNA structures from forming. Promotes peptidyl transferase center (PTC) maturation. This chain is Dual-action ribosomal maturation protein DarP, found in Bordetella pertussis (strain Tohama I / ATCC BAA-589 / NCTC 13251).